We begin with the raw amino-acid sequence, 743 residues long: Phosphoribosylformylglycinamidine synthase subunit PurL (743 aa).

Histidine 50 is an active-site residue. Tyrosine 53 and lysine 92 together coordinate ATP. Residue glutamate 94 participates in Mg(2+) binding. Substrate is bound by residues 95–98 and arginine 117; that span reads SHNH. The Proton acceptor role is filled by histidine 96. Mg(2+) is bound at residue aspartate 118. Substrate is bound at residue glutamine 241. Aspartate 269 contributes to the Mg(2+) binding site. Residue 313-315 participates in substrate binding; sequence ESQ. Residues aspartate 495 and glycine 532 each coordinate ATP. Residue asparagine 533 participates in Mg(2+) binding. Position 535 (serine 535) interacts with substrate.

Belongs to the FGAMS family. Monomer. Part of the FGAM synthase complex composed of 1 PurL, 1 PurQ and 2 PurS subunits.

It is found in the cytoplasm. It catalyses the reaction N(2)-formyl-N(1)-(5-phospho-beta-D-ribosyl)glycinamide + L-glutamine + ATP + H2O = 2-formamido-N(1)-(5-O-phospho-beta-D-ribosyl)acetamidine + L-glutamate + ADP + phosphate + H(+). It functions in the pathway purine metabolism; IMP biosynthesis via de novo pathway; 5-amino-1-(5-phospho-D-ribosyl)imidazole from N(2)-formyl-N(1)-(5-phospho-D-ribosyl)glycinamide: step 1/2. In terms of biological role, part of the phosphoribosylformylglycinamidine synthase complex involved in the purines biosynthetic pathway. Catalyzes the ATP-dependent conversion of formylglycinamide ribonucleotide (FGAR) and glutamine to yield formylglycinamidine ribonucleotide (FGAM) and glutamate. The FGAM synthase complex is composed of three subunits. PurQ produces an ammonia molecule by converting glutamine to glutamate. PurL transfers the ammonia molecule to FGAR to form FGAM in an ATP-dependent manner. PurS interacts with PurQ and PurL and is thought to assist in the transfer of the ammonia molecule from PurQ to PurL. This is Phosphoribosylformylglycinamidine synthase subunit PurL from Rhizobium leguminosarum bv. trifolii (strain WSM2304).